A 356-amino-acid chain; its full sequence is Histidinol-phosphate aminotransferase (356 aa).

K214 is modified (N6-(pyridoxal phosphate)lysine).

This sequence belongs to the class-II pyridoxal-phosphate-dependent aminotransferase family. Histidinol-phosphate aminotransferase subfamily. In terms of assembly, homodimer. Requires pyridoxal 5'-phosphate as cofactor.

It catalyses the reaction L-histidinol phosphate + 2-oxoglutarate = 3-(imidazol-4-yl)-2-oxopropyl phosphate + L-glutamate. Its pathway is amino-acid biosynthesis; L-histidine biosynthesis; L-histidine from 5-phospho-alpha-D-ribose 1-diphosphate: step 7/9. This is Histidinol-phosphate aminotransferase (hisC) from Escherichia coli O157:H7.